Reading from the N-terminus, the 257-residue chain is 5-oxoprolinase subunit A (257 aa).

It belongs to the LamB/PxpA family. In terms of assembly, forms a complex composed of PxpA, PxpB and PxpC.

The catalysed reaction is 5-oxo-L-proline + ATP + 2 H2O = L-glutamate + ADP + phosphate + H(+). Its function is as follows. Catalyzes the cleavage of 5-oxoproline to form L-glutamate coupled to the hydrolysis of ATP to ADP and inorganic phosphate. This chain is 5-oxoprolinase subunit A, found in Fusobacterium nucleatum subsp. nucleatum (strain ATCC 25586 / DSM 15643 / BCRC 10681 / CIP 101130 / JCM 8532 / KCTC 2640 / LMG 13131 / VPI 4355).